Reading from the N-terminus, the 118-residue chain is MIEALLVATGGFFGAITRFAISNWFKKRNKTSFPIATFLINITGAFLLGYIIGSGVTTGWQLLLGTGFMGAFTTFSTFKLESVQLLNRKNFSTFLLYLSATYIVGILFAFLGMQLGGI.

4 consecutive transmembrane segments (helical) span residues 1-21 (MIEA…RFAI), 33-53 (FPIA…YIIG), 55-75 (GVTT…FTTF), and 93-113 (TFLL…FLGM). Positions 70 and 73 each coordinate Na(+).

Belongs to the fluoride channel Fluc/FEX (TC 1.A.43) family.

It localises to the cell membrane. It catalyses the reaction fluoride(in) = fluoride(out). Na(+) is not transported, but it plays an essential structural role and its presence is essential for fluoride channel function. Fluoride-specific ion channel. Important for reducing fluoride concentration in the cell, thus reducing its toxicity. This chain is Fluoride-specific ion channel FluC 2, found in Bacillus cereus (strain ZK / E33L).